We begin with the raw amino-acid sequence, 251 residues long: Ubiquinone/menaquinone biosynthesis C-methyltransferase UbiE (251 aa).

S-adenosyl-L-methionine-binding positions include Thr74, Asp95, 123–124 (NA), and Ser140.

Belongs to the class I-like SAM-binding methyltransferase superfamily. MenG/UbiE family.

It catalyses the reaction a 2-demethylmenaquinol + S-adenosyl-L-methionine = a menaquinol + S-adenosyl-L-homocysteine + H(+). The enzyme catalyses a 2-methoxy-6-(all-trans-polyprenyl)benzene-1,4-diol + S-adenosyl-L-methionine = a 5-methoxy-2-methyl-3-(all-trans-polyprenyl)benzene-1,4-diol + S-adenosyl-L-homocysteine + H(+). It participates in quinol/quinone metabolism; menaquinone biosynthesis; menaquinol from 1,4-dihydroxy-2-naphthoate: step 2/2. It functions in the pathway cofactor biosynthesis; ubiquinone biosynthesis. Functionally, methyltransferase required for the conversion of demethylmenaquinol (DMKH2) to menaquinol (MKH2) and the conversion of 2-polyprenyl-6-methoxy-1,4-benzoquinol (DDMQH2) to 2-polyprenyl-3-methyl-6-methoxy-1,4-benzoquinol (DMQH2). This Escherichia coli O9:H4 (strain HS) protein is Ubiquinone/menaquinone biosynthesis C-methyltransferase UbiE.